Reading from the N-terminus, the 117-residue chain is Big defensin (117 aa).

Residues 1 to 23 (MKGNIGIAVFYMLLLLLPTDSIG) form the signal peptide. Positions 26–36 (MEEEQEKLFRQ) are excised as a propeptide. Disulfide bonds link cysteine 83–cysteine 113, cysteine 90–cysteine 108, and cysteine 94–cysteine 114.

The protein belongs to the big defensin family. As to quaternary structure, interacts with intracellular coagulation inhibitor 1/LICI-1. Expressed in all tissues examined, including hemocytes, heart, hepatopancreas, stomach, intestine and skeletal muscle.

The protein resides in the secreted. In terms of biological role, significantly inhibits the growth of Gram-negative and Gram-positive bacteria and fungi in vitro. This is Big defensin from Tachypleus tridentatus (Japanese horseshoe crab).